The chain runs to 420 residues: FLYWCH transcription factor 3 (420 aa).

Residues 87–104 are compositionally biased toward low complexity; sequence SSTSPDSQPSSSSSVMSS. Disordered regions lie at residues 87–107 and 119–138; these read SSTSPDSQPSSSSSVMSSTDE and KINKAQRQSSPNSSKPYTPR. The span at 123-134 shows a compositional bias: polar residues; it reads AQRQSSPNSSKP. The FLYWCH-type zinc finger occupies 140 to 195; that stretch reads IRERVLFDEHLYVFDKCSYDSKKRFFRCERKNTCPARIHTPFDAERVIHKVQVHNH.

Functionally, probable transcription factor. May bind to the promoters of target genes, including micro-RNA genes, in order to repress expression, and acting redundantly with flh-2. This is FLYWCH transcription factor 3 from Caenorhabditis elegans.